Here is a 691-residue protein sequence, read N- to C-terminus: Elongation factor G (691 aa).

Positions 8-282 (ERVRNIGIAA…AVIDYLPAPV (275 aa)) constitute a tr-type G domain. Residues 17 to 24 (AHIDAGKT), 81 to 85 (DTPGH), and 135 to 138 (NKMD) each bind GTP.

This sequence belongs to the TRAFAC class translation factor GTPase superfamily. Classic translation factor GTPase family. EF-G/EF-2 subfamily.

The protein resides in the cytoplasm. Catalyzes the GTP-dependent ribosomal translocation step during translation elongation. During this step, the ribosome changes from the pre-translocational (PRE) to the post-translocational (POST) state as the newly formed A-site-bound peptidyl-tRNA and P-site-bound deacylated tRNA move to the P and E sites, respectively. Catalyzes the coordinated movement of the two tRNA molecules, the mRNA and conformational changes in the ribosome. The polypeptide is Elongation factor G (Synechococcus sp. (strain CC9605)).